Reading from the N-terminus, the 792-residue chain is uncharacterized protein (792 aa).

25 consecutive repeat copies span residues 91 to 102 (NSSTNATTTASI), 103 to 114 (NVRTSATTTASI), 115 to 126 (NVRTSATTTEST), 127 to 138 (NSNTNATTTEST), 139 to 150 (NSSTNATTTASI), 151 to 162 (NVRTSATTTEST), 163 to 174 (NSSTNATTTASI), 175 to 186 (NVRTSATTTEST), 187 to 198 (NSSTNATTTASI), 199 to 210 (NVRTSATTTEST), 211 to 222 (NSNTNASTNATT), 223 to 234 (NSSTNATTTAST), 235 to 246 (NVRTSATTNATT), 247 to 258 (NSSTNATTTAST), 259 to 270 (NVRTSATTTAST), 271 to 282 (NVRTSATTTASI), 283 to 294 (NVRTSATTTESI), 295 to 306 (NSSTNATTTEST), 307 to 318 (NSNTSATTTEST), 319 to 330 (DSNTNATTTASI), 331 to 342 (NVRTSATTTEST), 343 to 354 (NSNTSATTTEST), 355 to 366 (DSNTSATTTAST), 367 to 378 (NSSTNATTTAST), and 379 to 390 (NSSTNATTTEST). The segment at 91–390 (NSSTNATTTA…STNATTTEST (300 aa)) is 25 X 12 AA tandem repeat of N-[SV]-[RS]-T-[NS]-A-T-T-T-[AE]-[ST]-[IT]. The disordered stretch occupies residues 113 to 417 (SINVRTSATT…RFHPVTDINK (305 aa)). Low complexity predominate over residues 118 to 393 (TSATTTESTN…ATTTESTNAS (276 aa)). Residues 394 to 417 (AKEDANKDGNAEDNRFHPVTDINK) show a composition bias toward basic and acidic residues.

This is an uncharacterized protein from Saccharomyces cerevisiae (strain ATCC 204508 / S288c) (Baker's yeast).